The following is a 223-amino-acid chain: RNA polymerase sigma-H factor (223 aa).

A Polymerase core binding motif is present at residues 67-80 (DIVQEGMIGLYKSI). A DNA-binding region (H-T-H motif) is located at residues 187–206 (YQEISEELNRHVKSIDNALQ).

It belongs to the sigma-70 factor family.

In terms of biological role, sigma factors are initiation factors that promote the attachment of RNA polymerase to specific initiation sites and are then released. This sigma factor is involved in the transition to post-exponential phase in the beginning of sporulation. This chain is RNA polymerase sigma-H factor (sigH), found in Bacillus licheniformis.